Consider the following 279-residue polypeptide: Secreted RxLR effector protein 90 (279 aa).

Residues 1 to 19 (MKSAAAFATFLTLSVFVAT) form the signal peptide. Residues 29–46 (RGLRSLADNQSTESSEGR) carry the RxLR-dEER motif. Disordered stretches follow at residues 29–53 (RGLR…YNHH) and 135–176 (ATPA…NLAG). N37 carries an N-linked (GlcNAc...) asparagine glycan. The span at 135–146 (ATPAPTTSVPSS) shows a compositional bias: low complexity. Polar residues predominate over residues 147-163 (LVNTDTSDNQLPTTPVA). A compositionally biased stretch (gly residues) spans 166 to 176 (QGGGIGSNLAG). N217 carries an N-linked (GlcNAc...) asparagine glycan.

The protein belongs to the RxLR effector family.

The protein localises to the secreted. It is found in the host cell membrane. In terms of biological role, secreted effector that completely suppresses the host cell death induced by cell death-inducing proteins. The chain is Secreted RxLR effector protein 90 from Plasmopara viticola (Downy mildew of grapevine).